A 226-amino-acid polypeptide reads, in one-letter code: UPF0173 metal-dependent hydrolase Tpet_1587 (226 aa).

It belongs to the UPF0173 family.

This chain is UPF0173 metal-dependent hydrolase Tpet_1587, found in Thermotoga petrophila (strain ATCC BAA-488 / DSM 13995 / JCM 10881 / RKU-1).